Here is a 956-residue protein sequence, read N- to C-terminus: DNA polymerase I (956 aa).

The 5'-3' exonuclease domain occupies V209–F296.

The protein belongs to the DNA polymerase type-A family. As to quaternary structure, single-chain monomer with multiple functions.

It carries out the reaction DNA(n) + a 2'-deoxyribonucleoside 5'-triphosphate = DNA(n+1) + diphosphate. Functionally, a DNA polymerase, required for DNA repair after DNA damage induced by ionizing radiation (IR); this is not the major DNA polymerase. Following severe irradiation (7 kGy of gamma irradiation) genomic DNA is fragmented. DNA is progressively degraded for the first 1.5 hours after IR, in a step promoted by RecA and counterbalanced by DNA Pol I and Pol III, followed by massive DNA synthesis and genome reassembly in the next hour. Optimal priming of DNA synthesis requires both RecA and RadA, Pol III initiates DNA synthesis while both Pol I and Pol III are required for its continuation. May also have 5'-3' exonuclease activity. This Deinococcus radiodurans (strain ATCC 13939 / DSM 20539 / JCM 16871 / CCUG 27074 / LMG 4051 / NBRC 15346 / NCIMB 9279 / VKM B-1422 / R1) protein is DNA polymerase I (polA).